A 21-amino-acid chain; its full sequence is Fibrinogen beta chain (21 aa).

Q1 is modified (pyrrolidone carboxylic acid). Residues 1–11 show a composition bias toward acidic residues; sequence QHSTDYDEVED. The tract at residues 1-21 is disordered; sequence QHSTDYDEVEDDRAKLHLDAR. O-linked (GalNAc...) threonine glycosylation occurs at T4. Residue Y6 is modified to Sulfotyrosine. Residues 12–21 are compositionally biased toward basic and acidic residues; the sequence is DRAKLHLDAR.

In terms of assembly, heterohexamer; disulfide linked. Contains 2 sets of 3 non-identical chains (alpha, beta and gamma). The 2 heterotrimers are in head to head conformation with the N-termini in a small central domain. Post-translationally, conversion of fibrinogen to fibrin is triggered by thrombin, which cleaves fibrinopeptides A and B from alpha and beta chains, and thus exposes the N-terminal polymerization sites responsible for the formation of the soft clot.

It localises to the secreted. Its function is as follows. Cleaved by the protease thrombin to yield monomers which, together with fibrinogen alpha (FGA) and fibrinogen gamma (FGG), polymerize to form an insoluble fibrin matrix. Fibrin has a major function in hemostasis as one of the primary components of blood clots. In addition, functions during the early stages of wound repair to stabilize the lesion and guide cell migration during re-epithelialization. Was originally thought to be essential for platelet aggregation, based on in vitro studies using anticoagulated blood. However subsequent studies have shown that it is not absolutely required for thrombus formation in vivo. Enhances expression of SELP in activated platelets. Maternal fibrinogen is essential for successful pregnancy. Fibrin deposition is also associated with infection, where it protects against IFNG-mediated hemorrhage. May also facilitate the antibacterial immune response via both innate and T-cell mediated pathways. This chain is Fibrinogen beta chain (FGB), found in Muntiacus muntjak (Barking deer).